The sequence spans 417 residues: Serine hydroxymethyltransferase (417 aa).

Residues leucine 121 and 125–127 (GHL) each bind (6S)-5,6,7,8-tetrahydrofolate. Lysine 229 carries the N6-(pyridoxal phosphate)lysine modification. 355 to 357 (SPF) contributes to the (6S)-5,6,7,8-tetrahydrofolate binding site.

It belongs to the SHMT family. Homodimer. Pyridoxal 5'-phosphate is required as a cofactor.

The protein localises to the cytoplasm. The catalysed reaction is (6R)-5,10-methylene-5,6,7,8-tetrahydrofolate + glycine + H2O = (6S)-5,6,7,8-tetrahydrofolate + L-serine. It participates in one-carbon metabolism; tetrahydrofolate interconversion. It functions in the pathway amino-acid biosynthesis; glycine biosynthesis; glycine from L-serine: step 1/1. In terms of biological role, catalyzes the reversible interconversion of serine and glycine with tetrahydrofolate (THF) serving as the one-carbon carrier. This reaction serves as the major source of one-carbon groups required for the biosynthesis of purines, thymidylate, methionine, and other important biomolecules. Also exhibits THF-independent aldolase activity toward beta-hydroxyamino acids, producing glycine and aldehydes, via a retro-aldol mechanism. The chain is Serine hydroxymethyltransferase from Yersinia pestis bv. Antiqua (strain Antiqua).